Reading from the N-terminus, the 473-residue chain is tRNA-2-methylthio-N(6)-dimethylallyladenosine synthase (473 aa).

The tract at residues 1 to 21 (MTQDSALLQAPEAIPSESLRD) is disordered. The MTTase N-terminal domain occupies 26 to 146 (RKVFIKTYGC…LPEALRRAKQ (121 aa)). Cys35, Cys71, Cys109, Cys187, Cys191, and Cys194 together coordinate [4Fe-4S] cluster. The 233-residue stretch at 173–405 (RARGVTAFLT…QMLLLKQQQE (233 aa)) folds into the Radical SAM core domain. In terms of domain architecture, TRAM spans 408-470 (ESCVGKEIDL…TNSLFAEHAE (63 aa)).

This sequence belongs to the methylthiotransferase family. MiaB subfamily. As to quaternary structure, monomer. [4Fe-4S] cluster is required as a cofactor.

It localises to the cytoplasm. It catalyses the reaction N(6)-dimethylallyladenosine(37) in tRNA + (sulfur carrier)-SH + AH2 + 2 S-adenosyl-L-methionine = 2-methylsulfanyl-N(6)-dimethylallyladenosine(37) in tRNA + (sulfur carrier)-H + 5'-deoxyadenosine + L-methionine + A + S-adenosyl-L-homocysteine + 2 H(+). Catalyzes the methylthiolation of N6-(dimethylallyl)adenosine (i(6)A), leading to the formation of 2-methylthio-N6-(dimethylallyl)adenosine (ms(2)i(6)A) at position 37 in tRNAs that read codons beginning with uridine. This chain is tRNA-2-methylthio-N(6)-dimethylallyladenosine synthase, found in Rhizobium johnstonii (strain DSM 114642 / LMG 32736 / 3841) (Rhizobium leguminosarum bv. viciae).